The chain runs to 287 residues: MSKTTFDAQSITNSLRAAKHQPRKRFGQNFLHDRSVIREIVESIRLERDDNLIEIGPGMGALTEPLLAEVDAMTVVELDRDLADSLRIRIGANSHPNFEIIKNNAMHVDYRELYSDERGKLRVVGNLPYNISTPILFHLLSYADVIEDMHFMLQKEVVERITADVGSKTYGRLSVIMQYHCHTDYLLTVPRGAFNPPPKVTSAVFRLTPHIIKPVVAEDEEYFALVVRETFNHRRKTLRAIFKKSTLLPTLSEDDFAACAIDPQARPETLSVKDFVNLSNQARKVEG.

The segment covering 1-15 (MSKTTFDAQSITNSL) has biased composition (polar residues). Residues 1-20 (MSKTTFDAQSITNSLRAAKH) are disordered. S-adenosyl-L-methionine-binding residues include Asn-29, Leu-31, Gly-56, Glu-77, and Asn-126.

The protein belongs to the class I-like SAM-binding methyltransferase superfamily. rRNA adenine N(6)-methyltransferase family. RsmA subfamily.

It is found in the cytoplasm. The catalysed reaction is adenosine(1518)/adenosine(1519) in 16S rRNA + 4 S-adenosyl-L-methionine = N(6)-dimethyladenosine(1518)/N(6)-dimethyladenosine(1519) in 16S rRNA + 4 S-adenosyl-L-homocysteine + 4 H(+). In terms of biological role, specifically dimethylates two adjacent adenosines (A1518 and A1519) in the loop of a conserved hairpin near the 3'-end of 16S rRNA in the 30S particle. May play a critical role in biogenesis of 30S subunits. This Psychrobacter cryohalolentis (strain ATCC BAA-1226 / DSM 17306 / VKM B-2378 / K5) protein is Ribosomal RNA small subunit methyltransferase A.